The following is a 259-amino-acid chain: Putative cysteine-rich repeat secretory protein 25 (259 aa).

An N-terminal signal peptide occupies residues 1 to 31; that stretch reads MSSSFLSRPLVSVYVFAMVTMQLLFMQSVLS. 2 Gnk2-homologous domains span residues 37-138 and 144-256; these read AYLN…SIYT and YRHI…LYPF.

It belongs to the cysteine-rich repeat secretory protein family.

The protein resides in the secreted. The chain is Putative cysteine-rich repeat secretory protein 25 (CRRSP25) from Arabidopsis thaliana (Mouse-ear cress).